We begin with the raw amino-acid sequence, 618 residues long: Grainyhead-like protein 1 homolog (618 aa).

The interval 1-91 (MTQEYDNKRP…EVEHPEPDHS (91 aa)) is transcription activation. Basic and acidic residues predominate over residues 74–92 (RRSSTAKPEVEHPEPDHSK). The interval 74–94 (RRSSTAKPEVEHPEPDHSKRN) is disordered. Position 208 is a phosphothreonine (T208). The 227-residue stretch at 248–474 (SGNNFEYTLE…DLDTQPVLFI (227 aa)) folds into the Grh/CP2 DB domain. Interaction with DNA stretches follow at residues 380–389 (TDFSSQKGVK) and 427–430 (RKIR).

This sequence belongs to the grh/CP2 family. Grainyhead subfamily. In terms of assembly, binds DNA as homodimer. Homodimer, also forms heterodimers with GRHL2 or GRHL3. Methylation at Arg-9 and Lys-116 may be involved in regulating transcriptional activation. Isoform 1 is highly expressed in brain, pancreas, tonsil, placenta and kidney. Isoform 2 is highly expressed in brain and liver. Expressed at very low levels in non-steroidogenic cells.

The protein resides in the nucleus. Its function is as follows. Transcription factor involved in epithelial development. Binds directly to the consensus DNA sequence 5'-AACCGGTT-3'. Important regulator of DSG1 in the context of hair anchorage and epidermal differentiation, participates in the maintenance of the skin barrier. There is no genetic interaction with GRHL3, nor functional cooperativity due to diverse target gene selectivity during epithelia development. May play a role in regulating glucose homeostasis and insulin signaling. Functions as a transcription activator. In terms of biological role, may function as a repressor in tissues where both isoform 1 and isoform 2 are expressed. The polypeptide is Grainyhead-like protein 1 homolog (Homo sapiens (Human)).